Consider the following 145-residue polypeptide: D-aminoacyl-tRNA deacylase (145 aa).

Positions 137-138 (GP) match the Gly-cisPro motif, important for rejection of L-amino acids motif.

It belongs to the DTD family. In terms of assembly, homodimer.

It is found in the cytoplasm. The enzyme catalyses glycyl-tRNA(Ala) + H2O = tRNA(Ala) + glycine + H(+). The catalysed reaction is a D-aminoacyl-tRNA + H2O = a tRNA + a D-alpha-amino acid + H(+). In terms of biological role, an aminoacyl-tRNA editing enzyme that deacylates mischarged D-aminoacyl-tRNAs. Also deacylates mischarged glycyl-tRNA(Ala), protecting cells against glycine mischarging by AlaRS. Acts via tRNA-based rather than protein-based catalysis; rejects L-amino acids rather than detecting D-amino acids in the active site. By recycling D-aminoacyl-tRNA to D-amino acids and free tRNA molecules, this enzyme counteracts the toxicity associated with the formation of D-aminoacyl-tRNA entities in vivo and helps enforce protein L-homochirality. The chain is D-aminoacyl-tRNA deacylase from Pseudomonas syringae pv. syringae (strain B728a).